Reading from the N-terminus, the 240-residue chain is Caffeoyl-CoA O-methyltransferase 5 (240 aa).

Position 14 (lysine 14) interacts with substrate. S-adenosyl-L-methionine contacts are provided by residues threonine 56, glutamate 78, 80–81, serine 86, aspartate 104, and alanine 133; that span reads GV. Substrate is bound at residue aspartate 156. Aspartate 156 serves as a coordination point for a divalent metal cation. Residue aspartate 158 coordinates S-adenosyl-L-methionine. A divalent metal cation contacts are provided by aspartate 182 and asparagine 183. Position 187 (asparagine 187) interacts with substrate.

This sequence belongs to the class I-like SAM-binding methyltransferase superfamily. Cation-dependent O-methyltransferase family. CCoAMT subfamily. The cofactor is Mg(2+). As to expression, expression steadily increases from the bottom to the top of the plant.

The enzyme catalyses (E)-caffeoyl-CoA + S-adenosyl-L-methionine = (E)-feruloyl-CoA + S-adenosyl-L-homocysteine + H(+). The protein operates within aromatic compound metabolism; phenylpropanoid biosynthesis. In terms of biological role, methylates caffeoyl-CoA to feruloyl-CoA and 5-hydroxyferuloyl-CoA to sinapoyl-CoA. Plays a role in the synthesis of feruloylated polysaccharides. Involved in the reinforcement of the plant cell wall. Also involved in the responding to wounding or pathogen challenge by the increased formation of cell wall-bound ferulic acid polymers. Methylates 5-hydroxyferulolyl-CoA more efficiently than caffeoyl-CoA. The protein is Caffeoyl-CoA O-methyltransferase 5 (CCOAOMT5) of Nicotiana tabacum (Common tobacco).